The primary structure comprises 128 residues: Large ribosomal subunit protein bL17 (128 aa).

The protein belongs to the bacterial ribosomal protein bL17 family. As to quaternary structure, part of the 50S ribosomal subunit. Contacts protein L32.

The protein is Large ribosomal subunit protein bL17 of Streptococcus uberis (strain ATCC BAA-854 / 0140J).